Consider the following 195-residue polypeptide: Imidazoleglycerol-phosphate dehydratase (195 aa).

The protein belongs to the imidazoleglycerol-phosphate dehydratase family.

The protein localises to the cytoplasm. The enzyme catalyses D-erythro-1-(imidazol-4-yl)glycerol 3-phosphate = 3-(imidazol-4-yl)-2-oxopropyl phosphate + H2O. It functions in the pathway amino-acid biosynthesis; L-histidine biosynthesis; L-histidine from 5-phospho-alpha-D-ribose 1-diphosphate: step 6/9. In Cupriavidus metallidurans (strain ATCC 43123 / DSM 2839 / NBRC 102507 / CH34) (Ralstonia metallidurans), this protein is Imidazoleglycerol-phosphate dehydratase.